The sequence spans 257 residues: Aspartate/glutamate leucyltransferase (257 aa).

This sequence belongs to the R-transferase family. Bpt subfamily.

It localises to the cytoplasm. It catalyses the reaction N-terminal L-glutamyl-[protein] + L-leucyl-tRNA(Leu) = N-terminal L-leucyl-L-glutamyl-[protein] + tRNA(Leu) + H(+). The catalysed reaction is N-terminal L-aspartyl-[protein] + L-leucyl-tRNA(Leu) = N-terminal L-leucyl-L-aspartyl-[protein] + tRNA(Leu) + H(+). Functionally, functions in the N-end rule pathway of protein degradation where it conjugates Leu from its aminoacyl-tRNA to the N-termini of proteins containing an N-terminal aspartate or glutamate. The polypeptide is Aspartate/glutamate leucyltransferase (Nitrobacter hamburgensis (strain DSM 10229 / NCIMB 13809 / X14)).